Reading from the N-terminus, the 362-residue chain is Neutral protease 2 homolog MEP2 (362 aa).

Positions 1 to 19 are cleaved as a signal peptide; sequence MLFPSIVAALAALANPVLS. A propeptide spanning residues 20–177 is cleaved from the precursor; the sequence is LTIPQATGSE…SKAINPISAR (158 aa). Disulfide bonds link Cys184–Cys255 and Cys262–Cys280. His304 contacts Zn(2+). Glu305 is an active-site residue. Residues His308 and Asp319 each coordinate Zn(2+).

It belongs to the peptidase M35 family. It depends on Zn(2+) as a cofactor.

It is found in the secreted. The catalysed reaction is Preferential cleavage of bonds with hydrophobic residues in P1'. Also 3-Asn-|-Gln-4 and 8-Gly-|-Ser-9 bonds in insulin B chain.. Its function is as follows. Secreted metalloproteinase that allows assimilation of proteinaceous substrates. Shows high activities on basic nuclear substrates such as histone and protamine. May be involved in virulence. This is Neutral protease 2 homolog MEP2 (MEP2) from Coccidioides posadasii (strain C735) (Valley fever fungus).